The primary structure comprises 443 residues: D(2) dopamine receptor (443 aa).

Topologically, residues Met-1–Tyr-37 are extracellular. N-linked (GlcNAc...) asparagine glycans are attached at residues Asn-5, Asn-17, and Asn-23. A helical membrane pass occupies residues Ala-38–Ser-60. Topologically, residues Arg-61–Asn-70 are cytoplasmic. The chain crosses the membrane as a helical span at residues Tyr-71 to Tyr-93. The Extracellular segment spans residues Leu-94–Asp-108. An intrachain disulfide couples Cys-107 to Cys-182. A helical membrane pass occupies residues Ile-109–Ile-130. Residues Asp-131–Arg-151 lie on the Cytoplasmic side of the membrane. A helical transmembrane segment spans residues Val-152 to Phe-172. At Gly-173–Ala-188 the chain is on the extracellular side. Residues Phe-189–Tyr-213 traverse the membrane as a helical segment. The tract at residues Lys-211–Gln-373 is interaction with PPP1R9B. The Cytoplasmic segment spans residues Ile-214–Gln-373. The disordered stretch occupies residues Glu-282–Lys-332. A compositionally biased stretch (basic and acidic residues) spans Ala-323–Lys-332. The helical transmembrane segment at Met-374–Leu-395 threads the bilayer. At Asn-396–Ser-409 the chain is on the extracellular side. Cys-399 and Cys-401 are joined by a disulfide. The chain crosses the membrane as a helical span at residues Ala-410–Ile-431. Residues Glu-432–Cys-443 are Cytoplasmic-facing. Cys-443 carries S-palmitoyl cysteine lipidation.

This sequence belongs to the G-protein coupled receptor 1 family. As to quaternary structure, forms homo- and heterooligomers with DRD4. The interaction with DRD4 may modulate agonist-induced downstream signaling. Interacts with CADPS and CADPS2. Interacts with GPRASP1, PPP1R9B and CLIC6. Interacts with ARRB2. Interacts with HTR2A. Interacts with DRD1. Interacts with KCNA2. Post-translationally, palmitoylated. Palmitoylation which is required for proper localization to the plasma membrane and stability of the receptor could be carried on by ZDHHC4, ZDHHC3 and ZDHHC8.

The protein localises to the cell membrane. It is found in the golgi apparatus membrane. Its function is as follows. Dopamine receptor whose activity is mediated by G proteins which inhibit adenylyl cyclase. Positively regulates postnatal regression of retinal hyaloid vessels via suppression of VEGFR2/KDR activity, downstream of OPN5. This is D(2) dopamine receptor (DRD2) from Canis lupus familiaris (Dog).